Reading from the N-terminus, the 420-residue chain is Na(+)/H(+) antiporter NhaA (420 aa).

10 helical membrane passes run 34–54 (TTGG…ANLG), 69–89 (LTIE…IAGL), 107–127 (LVPI…YTLF), 141–161 (IPMA…GAGL), 168–190 (FLLT…FFST), 194–213 (IWWL…MQHF), 271–291 (WSAG…HVSG), 301–321 (PISL…ITLG), 342–362 (IIAV…MTDL), and 374–394 (AKAS…AMLH).

This sequence belongs to the NhaA Na(+)/H(+) (TC 2.A.33) antiporter family.

The protein resides in the cell membrane. It carries out the reaction Na(+)(in) + 2 H(+)(out) = Na(+)(out) + 2 H(+)(in). In terms of biological role, na(+)/H(+) antiporter that extrudes sodium in exchange for external protons. This is Na(+)/H(+) antiporter NhaA from Cutibacterium acnes (strain DSM 16379 / KPA171202) (Propionibacterium acnes).